Reading from the N-terminus, the 508-residue chain is DNA-directed RNA polymerase subunit alpha (508 aa).

The segment at 1–380 (MKHILLSCVE…HLFSPFLQTH (380 aa)) is alpha N-terminal domain (alpha-NTD). An alpha C-terminal domain (alpha-CTD) region spans residues 434–508 (NLVTAIQTLD…LKNFGVLPTS (75 aa)).

Belongs to the RNA polymerase alpha chain family. As to quaternary structure, in plastids the minimal PEP RNA polymerase catalytic core is composed of four subunits: alpha, beta, beta', and beta''. When a (nuclear-encoded) sigma factor is associated with the core the holoenzyme is formed, which can initiate transcription.

It localises to the plastid. The protein localises to the chloroplast. It catalyses the reaction RNA(n) + a ribonucleoside 5'-triphosphate = RNA(n+1) + diphosphate. Its function is as follows. DNA-dependent RNA polymerase catalyzes the transcription of DNA into RNA using the four ribonucleoside triphosphates as substrates. The protein is DNA-directed RNA polymerase subunit alpha (rpoA) of Oltmannsiellopsis viridis (Marine flagellate).